Here is a 332-residue protein sequence, read N- to C-terminus: MVREKVTVSTRTLQWKCVESRTDSKRLYYGRFILSPLMKGQADTIGIALRRALLAEIEGTRITRVKFANASHEYSTIAGIQESVHEILMNLKEIVLRSNLYGTCDASISFKGPGYVTAEDIILPPHVEIVDSTQHIAWLTEPIDLCIGLKIERNRGYFIKTHANFEDGSYPIDAVFMPVQNANHSIHSYGNEKQEILFLEIWTNGSLTPKEALHEASRNLIDLFIPFLHMEKENLPLEDADHTIPLSPFTVYYKVAKNKKKLSLESLFIDQLEFPPKIYNCLKKSNIFTLLDLLNNSQEDLIKIEHFRLEDVKQILAILGKHFALDLPKNLN.

The segment at 1–231 is alpha N-terminal domain (alpha-NTD); it reads MVREKVTVST…DLFIPFLHME (231 aa). The alpha C-terminal domain (alpha-CTD) stretch occupies residues 262–332; that stretch reads LSLESLFIDQ…FALDLPKNLN (71 aa).

Belongs to the RNA polymerase alpha chain family. In plastids the minimal PEP RNA polymerase catalytic core is composed of four subunits: alpha, beta, beta', and beta''. When a (nuclear-encoded) sigma factor is associated with the core the holoenzyme is formed, which can initiate transcription.

Its subcellular location is the plastid. It catalyses the reaction RNA(n) + a ribonucleoside 5'-triphosphate = RNA(n+1) + diphosphate. Its function is as follows. DNA-dependent RNA polymerase catalyzes the transcription of DNA into RNA using the four ribonucleoside triphosphates as substrates. The chain is DNA-directed RNA polymerase subunit alpha from Cuscuta japonica (Japanese dodder).